We begin with the raw amino-acid sequence, 454 residues long: tRNA modification GTPase MnmE (454 aa).

3 residues coordinate (6S)-5-formyl-5,6,7,8-tetrahydrofolate: Arg-23, Glu-80, and Lys-120. In terms of domain architecture, TrmE-type G spans 216–377 (GMKVVIAGRP…LRNHLKQSMG (162 aa)). Residue Asn-226 coordinates K(+). Residues 226 to 231 (NAGKSS), 245 to 251 (TDIAGTT), 270 to 273 (DTAG), and 335 to 338 (NKAD) each bind GTP. Ser-230 serves as a coordination point for Mg(2+). Positions 245, 247, and 250 each coordinate K(+). Residue Thr-251 coordinates Mg(2+). Lys-454 serves as a coordination point for (6S)-5-formyl-5,6,7,8-tetrahydrofolate.

This sequence belongs to the TRAFAC class TrmE-Era-EngA-EngB-Septin-like GTPase superfamily. TrmE GTPase family. In terms of assembly, homodimer. Heterotetramer of two MnmE and two MnmG subunits. It depends on K(+) as a cofactor.

The protein localises to the cytoplasm. Functionally, exhibits a very high intrinsic GTPase hydrolysis rate. Involved in the addition of a carboxymethylaminomethyl (cmnm) group at the wobble position (U34) of certain tRNAs, forming tRNA-cmnm(5)s(2)U34. This is tRNA modification GTPase MnmE from Escherichia coli O157:H7.